We begin with the raw amino-acid sequence, 84 residues long: Large ribosomal subunit protein bL27 (84 aa).

A disordered region spans residues 1–25 (MAHKKGAGSTKNGRDSKPKMLGVKR).

Belongs to the bacterial ribosomal protein bL27 family.

This is Large ribosomal subunit protein bL27 from Dehalococcoides mccartyi (strain ATCC BAA-2266 / KCTC 15142 / 195) (Dehalococcoides ethenogenes (strain 195)).